The chain runs to 605 residues: Elongation factor 4 (605 aa).

The tr-type G domain occupies 11–193; the sequence is KNIRNFSIIA…TLVDVIPAPT (183 aa). Residues 23 to 28 and 140 to 143 contribute to the GTP site; these read DHGKST and NKID.

This sequence belongs to the TRAFAC class translation factor GTPase superfamily. Classic translation factor GTPase family. LepA subfamily.

Its subcellular location is the cell inner membrane. The enzyme catalyses GTP + H2O = GDP + phosphate + H(+). Required for accurate and efficient protein synthesis under certain stress conditions. May act as a fidelity factor of the translation reaction, by catalyzing a one-codon backward translocation of tRNAs on improperly translocated ribosomes. Back-translocation proceeds from a post-translocation (POST) complex to a pre-translocation (PRE) complex, thus giving elongation factor G a second chance to translocate the tRNAs correctly. Binds to ribosomes in a GTP-dependent manner. This chain is Elongation factor 4, found in Acinetobacter baumannii (strain AB307-0294).